The primary structure comprises 492 residues: N-succinylglutamate 5-semialdehyde dehydrogenase (492 aa).

Residue 220 to 225 (GSANTG) coordinates NAD(+). Residues glutamate 243 and cysteine 277 contribute to the active site.

Belongs to the aldehyde dehydrogenase family. AstD subfamily.

It catalyses the reaction N-succinyl-L-glutamate 5-semialdehyde + NAD(+) + H2O = N-succinyl-L-glutamate + NADH + 2 H(+). Its pathway is amino-acid degradation; L-arginine degradation via AST pathway; L-glutamate and succinate from L-arginine: step 4/5. Functionally, catalyzes the NAD-dependent reduction of succinylglutamate semialdehyde into succinylglutamate. This Escherichia coli (strain ATCC 8739 / DSM 1576 / NBRC 3972 / NCIMB 8545 / WDCM 00012 / Crooks) protein is N-succinylglutamate 5-semialdehyde dehydrogenase.